The following is a 255-amino-acid chain: Thiazole synthase (255 aa).

Residue lysine 96 is the Schiff-base intermediate with DXP of the active site. 1-deoxy-D-xylulose 5-phosphate contacts are provided by residues glycine 157, 183 to 184, and 205 to 206; these read AG and NS.

This sequence belongs to the ThiG family. As to quaternary structure, homotetramer. Forms heterodimers with either ThiH or ThiS.

Its subcellular location is the cytoplasm. It catalyses the reaction [ThiS sulfur-carrier protein]-C-terminal-Gly-aminoethanethioate + 2-iminoacetate + 1-deoxy-D-xylulose 5-phosphate = [ThiS sulfur-carrier protein]-C-terminal Gly-Gly + 2-[(2R,5Z)-2-carboxy-4-methylthiazol-5(2H)-ylidene]ethyl phosphate + 2 H2O + H(+). The protein operates within cofactor biosynthesis; thiamine diphosphate biosynthesis. Functionally, catalyzes the rearrangement of 1-deoxy-D-xylulose 5-phosphate (DXP) to produce the thiazole phosphate moiety of thiamine. Sulfur is provided by the thiocarboxylate moiety of the carrier protein ThiS. In vitro, sulfur can be provided by H(2)S. This is Thiazole synthase from Exiguobacterium sibiricum (strain DSM 17290 / CCUG 55495 / CIP 109462 / JCM 13490 / 255-15).